The chain runs to 361 residues: Phenylalanine--tRNA ligase alpha subunit (361 aa).

Glu-260 contacts Mg(2+).

The protein belongs to the class-II aminoacyl-tRNA synthetase family. Phe-tRNA synthetase alpha subunit type 1 subfamily. Tetramer of two alpha and two beta subunits. The cofactor is Mg(2+).

It is found in the cytoplasm. It catalyses the reaction tRNA(Phe) + L-phenylalanine + ATP = L-phenylalanyl-tRNA(Phe) + AMP + diphosphate + H(+). This is Phenylalanine--tRNA ligase alpha subunit from Chelativorans sp. (strain BNC1).